We begin with the raw amino-acid sequence, 134 residues long: Arsenate reductase (134 aa).

Active-site nucleophile residues include Cys-11, Cys-83, and Cys-90. 2 cysteine pairs are disulfide-bonded: Cys-11–Cys-83 and Cys-83–Cys-90.

It belongs to the low molecular weight phosphotyrosine protein phosphatase family. Thioredoxin-coupled ArsC subfamily.

The protein resides in the cytoplasm. The catalysed reaction is arsenate + [thioredoxin]-dithiol + H(+) = arsenite + [thioredoxin]-disulfide + H2O. Its function is as follows. Catalyzes the reduction of arsenate [As(V)] to arsenite [As(III)]. The chain is Arsenate reductase from Bacillus cereus (strain 03BB102).